The chain runs to 731 residues: RNA-binding protein RMD9-like, mitochondrial (731 aa).

Over residues 1 to 10 the composition is skewed to polar residues; sequence MIRLAQQTQV. 3 disordered regions span residues 1-29, 77-133, and 590-630; these read MIRLAQQTQVLKGKPPNQFVPHPTKNSLT, GGNI…GNSI, and QNDR…FNNP. A compositionally biased stretch (low complexity) spans 83–100; the sequence is NNNNHLAQNNSNNSNNHH. Positions 101–122 are enriched in basic residues; the sequence is NNNRNHHHNNNRNHHQNNHNHS. S132 bears the Phosphoserine mark. Residues 598 to 617 show a composition bias toward polar residues; it reads SNMNSTQISRTATPSPSLTP.

This sequence belongs to the RMD9 family. Monomer. In terms of processing, phosphorylated. Phosphorylation promotes binding to RNA.

Its subcellular location is the mitochondrion inner membrane. May be involved in the processing or stability of mitochondrial mRNAs. The sequence is that of RNA-binding protein RMD9-like, mitochondrial from Saccharomyces cerevisiae (strain ATCC 204508 / S288c) (Baker's yeast).